Reading from the N-terminus, the 285-residue chain is MAGLGHPAAFGRATHAVVRALPESLGQHALRSAKGEEVDVARAERQHQLYVGVLGSKLGLQVVELPADESLPDCVFVEDVAVVCEETALITRPGAPSRRKEVDMMKEALEKLQLNIVEMKDENATLDGGDVLFTGREFFVGLSKRTNQRGAEILADTFKDYAVSTVPVADGLHLKSFCSMAGPNLIAIGSSESAQKALKIMQQMSDHRYDKLTVPDDIAANCIYLNIPNKGHVLLHRTPEEYPESAKVYEKLKDHMLIPVSMSELEKVDGLLTCCSVLINKKVDS.

Alanine 2 is modified (N-acetylalanine). Substrate-binding positions include leucine 30, aspartate 73, 78-79 (ED), arginine 98, and arginine 145. Catalysis depends on histidine 173, which acts as the Proton donor. At cysteine 222 the chain carries S-nitrosocysteine. Position 268 (valine 268) interacts with substrate. Cysteine 274 is subject to S-nitrosocysteine. Cysteine 274 serves as the catalytic Nucleophile. Residue cysteine 274 participates in Zn(2+) binding.

Belongs to the DDAH family. Monomer. In terms of tissue distribution, detected in brain, liver, kidney and pancreas, and at low levels in skeletal muscle.

It carries out the reaction N(omega),N(omega)-dimethyl-L-arginine + H2O = dimethylamine + L-citrulline. The enzyme catalyses N(omega)-methyl-L-arginine + H2O = L-citrulline + methylamine. Inhibited by zinc ions. Enzyme purified in the absence of 1,10-phenanthroline contains on average 0.4 zinc atoms per subunit. Inhibited by 4-hydroxy-nonenal through the formation of a covalent adduct with His-173. Competitively inhibited by N(5)-iminopropyl-ornithine. Functionally, hydrolyzes N(G),N(G)-dimethyl-L-arginine (ADMA) and N(G)-monomethyl-L-arginine (MMA) which act as inhibitors of NOS. Has therefore a role in the regulation of nitric oxide generation. In Homo sapiens (Human), this protein is N(G),N(G)-dimethylarginine dimethylaminohydrolase 1.